A 113-amino-acid chain; its full sequence is U11-theraphotoxin-Hhn1t (113 aa).

The signal sequence occupies residues 1-21 (MNTVRVTFLLVFVLAVSLGQA). Residues 22–74 (DKDENRMEMQEKTEQGKSYLDFAENLLLQKLEELEAKLLEEDSEESRNSRQKR) constitute a propeptide that is removed on maturation. A compositionally biased stretch (basic and acidic residues) spans 60 to 69 (LEEDSEESRN). A disordered region spans residues 60–83 (LEEDSEESRNSRQKRCIGEGVPCD). Disulfide bonds link cysteine 75–cysteine 90, cysteine 82–cysteine 95, and cysteine 89–cysteine 110.

It belongs to the neurotoxin 14 (magi-1) family. 01 (HNTX-16) subfamily. In terms of tissue distribution, expressed by the venom gland.

It localises to the secreted. Probable ion channel inhibitor. The sequence is that of U11-theraphotoxin-Hhn1t from Cyriopagopus hainanus (Chinese bird spider).